We begin with the raw amino-acid sequence, 499 residues long: Lysine--tRNA ligase (499 aa).

The Mg(2+) site is built by Glu-408 and Glu-415.

It belongs to the class-II aminoacyl-tRNA synthetase family. In terms of assembly, homodimer. The cofactor is Mg(2+).

It is found in the cytoplasm. It carries out the reaction tRNA(Lys) + L-lysine + ATP = L-lysyl-tRNA(Lys) + AMP + diphosphate. This chain is Lysine--tRNA ligase, found in Bacillus mycoides (strain KBAB4) (Bacillus weihenstephanensis).